Consider the following 220-residue polypeptide: Pyridoxine/pyridoxamine 5'-phosphate oxidase (220 aa).

Residues 69–74, 84–85, Arg90, Lys91, and Gln113 each bind FMN; these read RVVLLK and YT. Lys74 is a binding site for substrate. Residues Tyr131, Arg135, and Ser139 each contribute to the substrate site. Residues 148–149 and Trp193 contribute to the FMN site; that span reads QS. 199–201 contributes to the substrate binding site; that stretch reads RLH. An FMN-binding site is contributed by Arg203.

The protein belongs to the pyridoxamine 5'-phosphate oxidase family. Homodimer. It depends on FMN as a cofactor.

The catalysed reaction is pyridoxamine 5'-phosphate + O2 + H2O = pyridoxal 5'-phosphate + H2O2 + NH4(+). It catalyses the reaction pyridoxine 5'-phosphate + O2 = pyridoxal 5'-phosphate + H2O2. The protein operates within cofactor metabolism; pyridoxal 5'-phosphate salvage; pyridoxal 5'-phosphate from pyridoxamine 5'-phosphate: step 1/1. It functions in the pathway cofactor metabolism; pyridoxal 5'-phosphate salvage; pyridoxal 5'-phosphate from pyridoxine 5'-phosphate: step 1/1. Its function is as follows. Catalyzes the oxidation of either pyridoxine 5'-phosphate (PNP) or pyridoxamine 5'-phosphate (PMP) into pyridoxal 5'-phosphate (PLP). This chain is Pyridoxine/pyridoxamine 5'-phosphate oxidase, found in Myxococcus xanthus.